Reading from the N-terminus, the 232-residue chain is Histone H1.X (232 aa).

In terms of domain architecture, H15 spans 36-112 (HHPSYMDMIK…GATGSFRMGK (77 aa)). The tract at residues 142–232 (ISKAEKTKPS…LRTGTRKSYC (91 aa)) is disordered. Over residues 159–197 (KKGKPISTMKKRGVMSKKRSSKNKMAPKAKSHGLKKKGP) the composition is skewed to basic residues.

This sequence belongs to the histone H1/H5 family.

Its subcellular location is the nucleus. The protein localises to the chromosome. This is Histone H1.X (hil-1) from Caenorhabditis elegans.